Consider the following 479-residue polypeptide: mRNA export factor ICP27 homolog (479 aa).

The segment covering 1 to 15 (MVPSQRLSRTSSISS) has biased composition (low complexity). Disordered regions lie at residues 1–77 (MVPS…PSSV) and 91–210 (KKWD…NKPW). The span at 35–44 (TDCDMDPMEG) shows a compositional bias: acidic residues. Residues 132-142 (EVHGCTDESYG) show a composition bias toward basic and acidic residues. Zn(2+) is bound by residues cysteine 354, histidine 445, cysteine 449, and cysteine 454. A CHC2-type zinc finger spans residues 354-454 (CFLPNTRDYN…HTRDCRSASC (101 aa)).

This sequence belongs to the HHV-1 ICP27 protein family. Interacts with host XPO1 and with the XPO1 export pathway components small GTPase RAN and nucleoporin NUP214. Interacts with host SPEN, OTT1 and OTT3. Interacts with host SRSF1, SRSF3, SRSF7 and SRPK1. Interacts with host DHX9; this interaction may have an inhibitory effect on virion production. Interacts (via N-terminus) with host NXF1; this interaction plays a role in mRNA export. Post-translationally, phosphorylated by cellular protein kinase CK2.

It localises to the host nucleus. It is found in the host cytoplasm. Promotes the nuclear export of a subset of early and late viral mRNAs by interacting with mRNAs and cellular export proteins. Additionally may prevent the establishment of cellular antiviral state, by acting as an alternative splicing factor for cellular RNAs such as STAT1, resulting in a STAT1 mRNA incapable of producing the STAT1alpha isoform. This Homo sapiens (Human) protein is mRNA export factor ICP27 homolog.